A 339-amino-acid chain; its full sequence is uncharacterized protein (339 aa).

Position 28-35 (28-35 (GPINSGKT)) interacts with ATP.

It belongs to the archaeal ATPase family.

This is an uncharacterized protein from Pyrococcus abyssi (strain GE5 / Orsay).